A 448-amino-acid chain; its full sequence is Probable glycine dehydrogenase (decarboxylating) subunit 1 (448 aa).

The protein belongs to the GcvP family. N-terminal subunit subfamily. As to quaternary structure, the glycine cleavage system is composed of four proteins: P, T, L and H. In this organism, the P 'protein' is a heterodimer of two subunits.

It carries out the reaction N(6)-[(R)-lipoyl]-L-lysyl-[glycine-cleavage complex H protein] + glycine + H(+) = N(6)-[(R)-S(8)-aminomethyldihydrolipoyl]-L-lysyl-[glycine-cleavage complex H protein] + CO2. In terms of biological role, the glycine cleavage system catalyzes the degradation of glycine. The P protein binds the alpha-amino group of glycine through its pyridoxal phosphate cofactor; CO(2) is released and the remaining methylamine moiety is then transferred to the lipoamide cofactor of the H protein. The protein is Probable glycine dehydrogenase (decarboxylating) subunit 1 of Staphylococcus aureus (strain COL).